The sequence spans 159 residues: Ethylene-responsive transcription factor ERF069 (159 aa).

2 disordered regions span residues 1–36 (MKRI…KKLV) and 128–159 (DAPT…EEVV). Residues 74-134 (KFRGVRQRPW…IGPDAPTNFG (61 aa)) constitute a DNA-binding region (AP2/ERF). The span at 136–148 (PDVDSAVVKKQDS) shows a compositional bias: basic and acidic residues.

Belongs to the AP2/ERF transcription factor family. ERF subfamily.

The protein localises to the nucleus. Functionally, probably acts as a transcriptional activator. Binds to the GCC-box pathogenesis-related promoter element. May be involved in the regulation of gene expression by stress factors and by components of stress signal transduction pathways. This chain is Ethylene-responsive transcription factor ERF069 (ERF069), found in Arabidopsis thaliana (Mouse-ear cress).